We begin with the raw amino-acid sequence, 186 residues long: MSTLADTIHIENVVASSDLGQELALDQLSTDLPGAEYNPEDFPGVVYRLQEPKSATLIFRSGKVVCTGAKSVDDVHEALGIVFGDIRELGIDVTSNPPIEVQNIVSSASLEQSLNLNAIAIGLGLEQIEYEPEQFPGLVYRLDDPDVVVLLFGSGKLVITGGQNPDEAEQALAHVQDRLTELGLLD.

Tandem repeats lie at residues 10–86 (IENV…FGDI) and 101–179 (VQNI…QDRL).

The protein belongs to the TBP family.

In terms of biological role, general factor that plays a role in the activation of archaeal genes transcribed by RNA polymerase. Binds specifically to the TATA box promoter element which lies close to the position of transcription initiation. The protein is TATA-box-binding protein B (tbpB1) of Halobacterium salinarum (strain ATCC 700922 / JCM 11081 / NRC-1) (Halobacterium halobium).